We begin with the raw amino-acid sequence, 538 residues long: MAKIIKYDEEARQGMLEGLDELANTVKVTLGPRGRNVVLDKTYGAPTITNDGVSIAKEIDLEDPYARIGAELVKEVAKKTDDVAGDGTTTATVLAQSLVHEGLRNVTAGSNPIALRRGIEKASDAIVERLLSNAKPVETKEQIAATATISAGDPEVGDKIAEALDKVGQDGVVTVEDNNKFGLDLEFTEGMRFDKGYISPYFVTNADEQTAVLEDPYILLTSGKVSSQQDIVHIAELVMKSGKPLLIVAEDVDGEALPTLVLNKIRGTFNTVAVKAPGFGDRRKAMLQDMAILTGAQVVSDELGLKLDSIDDTVFGHASKVIVSKDETTIVSGAGSKEDVAARVAQIRSEIEDSDSDYDREKLQERLAKLAGGVAVIKVGAATEVEAKERKHRIEDAVRNAKAAIEEGLLPGGGVALVQAAADVQKNVKLEGDEATGAGIVFRAIEAPLKQIAQNAGFSGEVVIDKVRTLPAGSGLNAATGEYEDLLSAGVTDPVKVTRSALQNAASIAGLFLTTEAVVANKPEPPAPAAAPNPDMGY.

Residues 29–32 (TLGP), 86–90 (DGTTT), glycine 413, 477–479 (NAA), and aspartate 493 contribute to the ATP site.

This sequence belongs to the chaperonin (HSP60) family. Forms a cylinder of 14 subunits composed of two heptameric rings stacked back-to-back. Interacts with the co-chaperonin GroES.

It localises to the cytoplasm. The enzyme catalyses ATP + H2O + a folded polypeptide = ADP + phosphate + an unfolded polypeptide.. Functionally, together with its co-chaperonin GroES, plays an essential role in assisting protein folding. The GroEL-GroES system forms a nano-cage that allows encapsulation of the non-native substrate proteins and provides a physical environment optimized to promote and accelerate protein folding. This is Chaperonin GroEL from Scardovia inopinata (Bifidobacterium inopinatum).